The sequence spans 312 residues: DNA-directed RNA polymerase subunit alpha (312 aa).

The alpha N-terminal domain (alpha-NTD) stretch occupies residues 1–225 (MIEFEKPNIT…VEHFKVFESA (225 aa)). The tract at residues 243 to 312 (KEKKLEMTIE…DLGLSLRQED (70 aa)) is alpha C-terminal domain (alpha-CTD).

This sequence belongs to the RNA polymerase alpha chain family. Homodimer. The RNAP catalytic core consists of 2 alpha, 1 beta, 1 beta' and 1 omega subunit. When a sigma factor is associated with the core the holoenzyme is formed, which can initiate transcription.

The catalysed reaction is RNA(n) + a ribonucleoside 5'-triphosphate = RNA(n+1) + diphosphate. In terms of biological role, DNA-dependent RNA polymerase catalyzes the transcription of DNA into RNA using the four ribonucleoside triphosphates as substrates. The chain is DNA-directed RNA polymerase subunit alpha from Lactobacillus helveticus (strain DPC 4571).